The chain runs to 130 residues: Small ribosomal subunit protein uS8 (130 aa).

The protein belongs to the universal ribosomal protein uS8 family. As to quaternary structure, part of the 30S ribosomal subunit.

In terms of biological role, one of the primary rRNA binding proteins, it binds directly to 16S rRNA central domain where it helps coordinate assembly of the platform of the 30S subunit. This is Small ribosomal subunit protein uS8 from Methanotorris igneus (Methanococcus igneus).